A 249-amino-acid chain; its full sequence is tRNA pseudouridine synthase A (249 aa).

Catalysis depends on Asp-53, which acts as the Nucleophile. Tyr-111 is a substrate binding site.

Belongs to the tRNA pseudouridine synthase TruA family. In terms of assembly, homodimer.

The enzyme catalyses uridine(38/39/40) in tRNA = pseudouridine(38/39/40) in tRNA. Its function is as follows. Formation of pseudouridine at positions 38, 39 and 40 in the anticodon stem and loop of transfer RNAs. The polypeptide is tRNA pseudouridine synthase A (Streptococcus sanguinis (strain SK36)).